A 98-amino-acid polypeptide reads, in one-letter code: Large ribosomal subunit protein uL23c (98 aa).

Belongs to the universal ribosomal protein uL23 family. As to quaternary structure, part of the 50S ribosomal subunit.

Its subcellular location is the plastid. It is found in the chloroplast. Functionally, binds to 23S rRNA. The protein is Large ribosomal subunit protein uL23c (rpl23) of Thalassiosira pseudonana (Marine diatom).